A 545-amino-acid chain; its full sequence is 1,3-beta-glucanosyltransferase ARB_07487 (545 aa).

An N-terminal signal peptide occupies residues 1–19 (MKFSSLAAATALVAGSVVA). N-linked (GlcNAc...) asparagine glycans are attached at residues Asn51 and Asn69. Cysteines 88 and 117 form a disulfide. Residues Tyr106, 133-141 (SEPSTSIIR), Asn174, and Glu175 contribute to the (1,3-beta-D-glucosyl)n site. The active-site Proton donor is the Glu175. The N-linked (GlcNAc...) asparagine glycan is linked to Asn179. Asp216 and Arg221 together coordinate (1,3-beta-D-glucosyl)n. Cystine bridges form between Cys230–Cys363, Cys248–Cys279, Cys384–Cys437, Cys393–Cys464, and Cys412–Cys419. Glu276 (nucleophile) is an active-site residue. Tyr308 provides a ligand contact to (1,3-beta-D-glucosyl)n. The tract at residues 493–513 (GTGSVTSAPGSGGNKPDQGAA) is disordered. Ala512 carries the GPI-anchor amidated alanine lipid modification. The propeptide at 513–545 (ASTISAPSVNLGIVKLGAYIFCAVLAGAGMILI) is removed in mature form.

It belongs to the glycosyl hydrolase 72 family. Post-translationally, the GPI-anchor is attached to the protein in the endoplasmic reticulum and serves to target the protein to the cell surface. There, the glucosamine-inositol phospholipid moiety is cleaved off and the GPI-modified mannoprotein is covalently attached via its lipidless GPI glycan remnant to the 1,6-beta-glucan of the outer cell wall layer.

It is found in the secreted. Its subcellular location is the cell membrane. The protein resides in the cell wall. In terms of biological role, splits internally a 1,3-beta-glucan molecule and transfers the newly generated reducing end (the donor) to the non-reducing end of another 1,3-beta-glucan molecule (the acceptor) forming a 1,3-beta linkage, resulting in the elongation of 1,3-beta-glucan chains in the cell wall. Involved in cell wall biosynthesis and morphogenesis. The sequence is that of 1,3-beta-glucanosyltransferase ARB_07487 from Arthroderma benhamiae (strain ATCC MYA-4681 / CBS 112371) (Trichophyton mentagrophytes).